Reading from the N-terminus, the 537-residue chain is Exodeoxyribonuclease 7 large subunit (537 aa).

The disordered stretch occupies residues 508-537 (GEGAPVEPPQAARPSKGARTKAAQPSLFDD).

It belongs to the XseA family. In terms of assembly, heterooligomer composed of large and small subunits.

The protein resides in the cytoplasm. The catalysed reaction is Exonucleolytic cleavage in either 5'- to 3'- or 3'- to 5'-direction to yield nucleoside 5'-phosphates.. Bidirectionally degrades single-stranded DNA into large acid-insoluble oligonucleotides, which are then degraded further into small acid-soluble oligonucleotides. The polypeptide is Exodeoxyribonuclease 7 large subunit (Azorhizobium caulinodans (strain ATCC 43989 / DSM 5975 / JCM 20966 / LMG 6465 / NBRC 14845 / NCIMB 13405 / ORS 571)).